The following is a 548-amino-acid chain: Chaperonin GroEL (548 aa).

ATP-binding positions include Thr30–Pro33, Lys51, Asp87–Thr91, Gly415, and Asp496.

It belongs to the chaperonin (HSP60) family. In terms of assembly, forms a cylinder of 14 subunits composed of two heptameric rings stacked back-to-back. Interacts with the co-chaperonin GroES.

It localises to the cytoplasm. The catalysed reaction is ATP + H2O + a folded polypeptide = ADP + phosphate + an unfolded polypeptide.. Its function is as follows. Together with its co-chaperonin GroES, plays an essential role in assisting protein folding. The GroEL-GroES system forms a nano-cage that allows encapsulation of the non-native substrate proteins and provides a physical environment optimized to promote and accelerate protein folding. In Haemophilus influenzae (strain PittGG), this protein is Chaperonin GroEL.